A 427-amino-acid polypeptide reads, in one-letter code: Serine--tRNA ligase (427 aa).

Position 236–238 (Thr236–Glu238) interacts with L-serine. Position 267 to 269 (Arg267 to Glu269) interacts with ATP. Glu290 serves as a coordination point for L-serine. ATP is bound at residue Glu354–Ser357. Residue Ser388 coordinates L-serine.

Belongs to the class-II aminoacyl-tRNA synthetase family. Type-1 seryl-tRNA synthetase subfamily. In terms of assembly, homodimer. The tRNA molecule binds across the dimer.

It localises to the cytoplasm. The enzyme catalyses tRNA(Ser) + L-serine + ATP = L-seryl-tRNA(Ser) + AMP + diphosphate + H(+). It catalyses the reaction tRNA(Sec) + L-serine + ATP = L-seryl-tRNA(Sec) + AMP + diphosphate + H(+). Its pathway is aminoacyl-tRNA biosynthesis; selenocysteinyl-tRNA(Sec) biosynthesis; L-seryl-tRNA(Sec) from L-serine and tRNA(Sec): step 1/1. Catalyzes the attachment of serine to tRNA(Ser). Is also able to aminoacylate tRNA(Sec) with serine, to form the misacylated tRNA L-seryl-tRNA(Sec), which will be further converted into selenocysteinyl-tRNA(Sec). This is Serine--tRNA ligase from Psychrobacter arcticus (strain DSM 17307 / VKM B-2377 / 273-4).